The primary structure comprises 187 residues: UPF0301 protein YqgE (187 aa).

It belongs to the UPF0301 (AlgH) family.

In Salmonella paratyphi A (strain ATCC 9150 / SARB42), this protein is UPF0301 protein YqgE.